An 808-amino-acid polypeptide reads, in one-letter code: Probable inorganic carbon transporter subunit DabA (808 aa).

Zn(2+)-binding residues include Cys-335, Asp-337, His-497, and Cys-512.

The protein belongs to the inorganic carbon transporter (TC 9.A.2) DabA family. In terms of assembly, forms a complex with DabB. Zn(2+) serves as cofactor.

It localises to the cell inner membrane. Functionally, part of an energy-coupled inorganic carbon pump. The polypeptide is Probable inorganic carbon transporter subunit DabA (Rhodopseudomonas palustris (strain ATCC BAA-98 / CGA009)).